The following is a 44-amino-acid chain: AVLLKGPSGVLFEDGQKRLLPPGVEIVLLTESGAVLSNGENVQF.

Tandem repeats lie at residues 3-20 (LLKGPSGVLFEDGQKRLL) and 27-44 (VLLTESGAVLSNGENVQF).

As to expression, calcified shell.

This chain is Cuticle protein CP459, found in Cancer pagurus (Rock crab).